Here is a 599-residue protein sequence, read N- to C-terminus: Aspartate--tRNA(Asp/Asn) ligase (599 aa).

An L-aspartate-binding site is contributed by Glu180. The aspartate stretch occupies residues 204 to 207 (QLLK). L-aspartate is bound at residue Arg226. ATP-binding positions include 226 to 228 (RDE) and Gln235. His457 lines the L-aspartate pocket. Residue Glu491 participates in ATP binding. Residue Arg498 coordinates L-aspartate. 543-546 (GWDR) is an ATP binding site. Residues 565 to 599 (KAGGGRDPLTGAPAPISDEQRAETGVDYDPDADEN) are disordered. Positions 590 to 599 (VDYDPDADEN) are enriched in acidic residues.

This sequence belongs to the class-II aminoacyl-tRNA synthetase family. Type 1 subfamily. Homodimer.

The protein localises to the cytoplasm. It catalyses the reaction tRNA(Asx) + L-aspartate + ATP = L-aspartyl-tRNA(Asx) + AMP + diphosphate. In terms of biological role, aspartyl-tRNA synthetase with relaxed tRNA specificity since it is able to aspartylate not only its cognate tRNA(Asp) but also tRNA(Asn). Reaction proceeds in two steps: L-aspartate is first activated by ATP to form Asp-AMP and then transferred to the acceptor end of tRNA(Asp/Asn). This is Aspartate--tRNA(Asp/Asn) ligase from Bifidobacterium longum (strain DJO10A).